The sequence spans 132 residues: Fatty acid-binding protein 9 (132 aa).

Ser13, Ser14, Ser44, and Ser91 each carry phosphoserine.

This sequence belongs to the calycin superfamily. Fatty-acid binding protein (FABP) family.

It is found in the cytoplasm. The polypeptide is Fatty acid-binding protein 9 (FABP9) (Homo sapiens (Human)).